A 190-amino-acid polypeptide reads, in one-letter code: dTTP/UTP pyrophosphatase (190 aa).

Catalysis depends on Asp68, which acts as the Proton acceptor.

The protein belongs to the Maf family. YhdE subfamily. The cofactor is a divalent metal cation.

It is found in the cytoplasm. The catalysed reaction is dTTP + H2O = dTMP + diphosphate + H(+). It catalyses the reaction UTP + H2O = UMP + diphosphate + H(+). In terms of biological role, nucleoside triphosphate pyrophosphatase that hydrolyzes dTTP and UTP. May have a dual role in cell division arrest and in preventing the incorporation of modified nucleotides into cellular nucleic acids. The polypeptide is dTTP/UTP pyrophosphatase (Pyrococcus furiosus (strain ATCC 43587 / DSM 3638 / JCM 8422 / Vc1)).